A 167-amino-acid polypeptide reads, in one-letter code: Crossover junction endodeoxyribonuclease RuvC (167 aa).

Catalysis depends on residues aspartate 11, glutamate 71, and aspartate 143. Positions 11, 71, and 143 each coordinate Mg(2+).

Belongs to the RuvC family. As to quaternary structure, homodimer which binds Holliday junction (HJ) DNA. The HJ becomes 2-fold symmetrical on binding to RuvC with unstacked arms; it has a different conformation from HJ DNA in complex with RuvA. In the full resolvosome a probable DNA-RuvA(4)-RuvB(12)-RuvC(2) complex forms which resolves the HJ. Mg(2+) serves as cofactor.

It localises to the cytoplasm. The enzyme catalyses Endonucleolytic cleavage at a junction such as a reciprocal single-stranded crossover between two homologous DNA duplexes (Holliday junction).. Functionally, the RuvA-RuvB-RuvC complex processes Holliday junction (HJ) DNA during genetic recombination and DNA repair. Endonuclease that resolves HJ intermediates. Cleaves cruciform DNA by making single-stranded nicks across the HJ at symmetrical positions within the homologous arms, yielding a 5'-phosphate and a 3'-hydroxyl group; requires a central core of homology in the junction. The consensus cleavage sequence is 5'-(A/T)TT(C/G)-3'. Cleavage occurs on the 3'-side of the TT dinucleotide at the point of strand exchange. HJ branch migration catalyzed by RuvA-RuvB allows RuvC to scan DNA until it finds its consensus sequence, where it cleaves and resolves the cruciform DNA. In Bartonella bacilliformis (strain ATCC 35685 / KC583 / Herrer 020/F12,63), this protein is Crossover junction endodeoxyribonuclease RuvC.